Reading from the N-terminus, the 169-residue chain is Ubiquitin-fold modifier-conjugating enzyme 1 (169 aa).

The Glycyl thioester intermediate role is filled by cysteine 116.

Belongs to the ubiquitin-conjugating enzyme family. UFC1 subfamily.

E2-like enzyme which forms an intermediate with UFM1 via a thioester linkage. The protein is Ubiquitin-fold modifier-conjugating enzyme 1 of Nematostella vectensis (Starlet sea anemone).